A 318-amino-acid polypeptide reads, in one-letter code: DNA-directed RNA polymerase subunit alpha (318 aa).

Residues 1 to 227 (MTQFEIECLD…NLFSPLKTID (227 aa)) are alpha N-terminal domain (alpha-NTD). The interval 241–318 (HINQILIEEL…KEKTTKIYNK (78 aa)) is alpha C-terminal domain (alpha-CTD).

Belongs to the RNA polymerase alpha chain family. In terms of assembly, in plastids the minimal PEP RNA polymerase catalytic core is composed of four subunits: alpha, beta, beta', and beta''. When a (nuclear-encoded) sigma factor is associated with the core the holoenzyme is formed, which can initiate transcription.

The protein localises to the plastid. It localises to the chloroplast. It carries out the reaction RNA(n) + a ribonucleoside 5'-triphosphate = RNA(n+1) + diphosphate. In terms of biological role, DNA-dependent RNA polymerase catalyzes the transcription of DNA into RNA using the four ribonucleoside triphosphates as substrates. In Guillardia theta (Cryptophyte), this protein is DNA-directed RNA polymerase subunit alpha.